The following is a 321-amino-acid chain: Protein BIG GRAIN 1-like E (321 aa).

The segment at 134–217 (AGSKKNKSKS…PPPYLNTPTK (84 aa)) is disordered. Residues 135–147 (GSKKNKSKSKSKT) show a composition bias toward basic residues. Positions 172–206 (ISHFFSSSRSTSTTTTTTASSSSKSLISSSSSGFR) are enriched in low complexity.

Belongs to the BIG GRAIN 1 (BG1) plant protein family.

The protein resides in the cell membrane. Involved in auxin transport. Regulator of the auxin signaling pathway. In Arabidopsis thaliana (Mouse-ear cress), this protein is Protein BIG GRAIN 1-like E.